Consider the following 944-residue polypeptide: Translation initiation factor IF-2 (944 aa).

Disordered stretches follow at residues 50–91 (SAKT…FAGK) and 114–349 (KVEV…VPAT). Basic and acidic residues-rich tracts occupy residues 75 to 86 (ESAKKNKEDHPR), 124 to 157 (VVTE…ETKD), 164 to 185 (AEVK…EKKK), and 199 to 233 (KRAE…DNRR). Residues 267-280 (SSGSAPATDSFTPA) are compositionally biased toward polar residues. The segment covering 286–307 (SRRDRDRKKSDNNRDNTKDGNR) has biased composition (basic and acidic residues). Composition is skewed to polar residues over residues 317–331 (NRNQ…NWNQ) and 338–348 (YQNNQSSSVPA). The 172-residue stretch at 443–614 (ERPAVVTIMG…LLVAEVQELK (172 aa)) folds into the tr-type G domain. Residues 452-459 (GHVDHGKT) form a G1 region. 452-459 (GHVDHGKT) is a GTP binding site. Residues 477 to 481 (GITQH) are G2. The segment at 498 to 501 (DTPG) is G3. GTP-binding positions include 498 to 502 (DTPGH) and 552 to 555 (NKID). Residues 552 to 555 (NKID) are G4. Residues 590 to 592 (SAK) are G5.

This sequence belongs to the TRAFAC class translation factor GTPase superfamily. Classic translation factor GTPase family. IF-2 subfamily.

The protein resides in the cytoplasm. Its function is as follows. One of the essential components for the initiation of protein synthesis. Protects formylmethionyl-tRNA from spontaneous hydrolysis and promotes its binding to the 30S ribosomal subunits. Also involved in the hydrolysis of GTP during the formation of the 70S ribosomal complex. The sequence is that of Translation initiation factor IF-2 (infB) from Lactococcus lactis subsp. lactis (strain IL1403) (Streptococcus lactis).